Consider the following 140-residue polypeptide: Transcription antitermination protein NusB (140 aa).

This sequence belongs to the NusB family.

Functionally, involved in transcription antitermination. Required for transcription of ribosomal RNA (rRNA) genes. Binds specifically to the boxA antiterminator sequence of the ribosomal RNA (rrn) operons. This is Transcription antitermination protein NusB from Streptococcus pneumoniae (strain 70585).